The primary structure comprises 217 residues: Spore coat protein F-like protein YhcQ (217 aa).

Residues M1–Q11 are compositionally biased toward low complexity. Residues M1–E28 form a disordered region.

The protein belongs to the CotF family.

The protein resides in the spore coat. The protein is Spore coat protein F-like protein YhcQ (yhcQ) of Bacillus subtilis (strain 168).